A 231-amino-acid chain; its full sequence is Dephospho-CoA kinase domain-containing protein (231 aa).

The 205-residue stretch at 3 to 207 (LVGLTGGIAS…RSMEYLPLRL (205 aa)) folds into the DPCK domain. 8-15 (GGIASGKS) provides a ligand contact to ATP.

This sequence belongs to the CoaE family.

This is Dephospho-CoA kinase domain-containing protein (Dcakd) from Mus musculus (Mouse).